A 216-amino-acid chain; its full sequence is Serine/threonine-protein phosphatase 1 (216 aa).

Asp-24, His-26, Asp-53, and Asn-79 together coordinate Mn(2+). The Proton donor role is filled by His-80. Residue His-185 coordinates Mn(2+).

The protein belongs to the PPP phosphatase family. PP-1 subfamily. The cofactor is Mn(2+).

The catalysed reaction is O-phospho-L-seryl-[protein] + H2O = L-seryl-[protein] + phosphate. It catalyses the reaction O-phospho-L-threonyl-[protein] + H2O = L-threonyl-[protein] + phosphate. Inhibited by cadmium, copper, zinc when added cobalt when added concomitantly with manganese. In terms of biological role, can hydrolyze phosphorylated Ser-, Thr- or Tyr-substrates in vitro. The natural substrate is unknown. This is Serine/threonine-protein phosphatase 1 (pphA) from Salmonella typhimurium (strain LT2 / SGSC1412 / ATCC 700720).